The following is a 435-amino-acid chain: Adenylosuccinate synthetase (435 aa).

Residues 11-17 (GDEGKGK) and 39-41 (GHT) contribute to the GTP site. Asp12 (proton acceptor) is an active-site residue. Positions 12 and 39 each coordinate Mg(2+). IMP-binding positions include 12–15 (DEGK), 37–40 (NAGH), Thr134, Arg148, Asn230, Thr245, and Arg309. Catalysis depends on His40, which acts as the Proton donor. 305–311 (VTTGRKR) contributes to the substrate binding site. Residues Arg311, 337 to 339 (KLD), and 419 to 421 (GTG) each bind GTP.

Belongs to the adenylosuccinate synthetase family. Homodimer. Mg(2+) serves as cofactor.

The protein localises to the cytoplasm. It catalyses the reaction IMP + L-aspartate + GTP = N(6)-(1,2-dicarboxyethyl)-AMP + GDP + phosphate + 2 H(+). It functions in the pathway purine metabolism; AMP biosynthesis via de novo pathway; AMP from IMP: step 1/2. Functionally, plays an important role in the de novo pathway and in the salvage pathway of purine nucleotide biosynthesis. Catalyzes the first committed step in the biosynthesis of AMP from IMP. The polypeptide is Adenylosuccinate synthetase (Zygosaccharomyces rouxii (strain ATCC 2623 / CBS 732 / NBRC 1130 / NCYC 568 / NRRL Y-229)).